A 690-amino-acid chain; its full sequence is Elongation factor G (690 aa).

Residues 8 to 283 (EDYRNFGIMA…AVVDYLPSPV (276 aa)) form the tr-type G domain. GTP-binding positions include 17–24 (AHIDAGKT), 81–85 (DTPGH), and 135–138 (NKMD).

Belongs to the TRAFAC class translation factor GTPase superfamily. Classic translation factor GTPase family. EF-G/EF-2 subfamily.

The protein resides in the cytoplasm. Functionally, catalyzes the GTP-dependent ribosomal translocation step during translation elongation. During this step, the ribosome changes from the pre-translocational (PRE) to the post-translocational (POST) state as the newly formed A-site-bound peptidyl-tRNA and P-site-bound deacylated tRNA move to the P and E sites, respectively. Catalyzes the coordinated movement of the two tRNA molecules, the mRNA and conformational changes in the ribosome. The chain is Elongation factor G from Rhodopseudomonas palustris (strain BisB18).